The primary structure comprises 495 residues: Adenosylhomocysteinase (495 aa).

Residues Thr71, Asp156, and Glu218 each coordinate substrate. An NAD(+)-binding site is contributed by 219 to 221 (TTT). 2 residues coordinate substrate: Lys248 and Asp252. NAD(+) contacts are provided by residues Asn253, 282-287 (GYGDVG), Glu305, Asn340, 361-363 (IGH), and Asn409.

Belongs to the adenosylhomocysteinase family. The cofactor is NAD(+).

It is found in the cytoplasm. The enzyme catalyses S-adenosyl-L-homocysteine + H2O = L-homocysteine + adenosine. It functions in the pathway amino-acid biosynthesis; L-homocysteine biosynthesis; L-homocysteine from S-adenosyl-L-homocysteine: step 1/1. May play a key role in the regulation of the intracellular concentration of adenosylhomocysteine. This chain is Adenosylhomocysteinase, found in Mycobacterium bovis (strain ATCC BAA-935 / AF2122/97).